The following is a 768-amino-acid chain: Telomere repeats-binding bouquet formation protein 1 (768 aa).

ARM repeat units follow at residues E101–G145 and N341–S384. Residues E399–N448 adopt a coiled-coil conformation. Basic and acidic residues-rich tracts occupy residues G422–D436 and R461–S475. Disordered stretches follow at residues G422 to M441 and A454 to S475. Residues Q524–P700 form an interaction with TERF1 region. T648 carries the post-translational modification Phosphothreonine. Residues K707–I760 enclose the Myb-like domain.

Belongs to the TERB1 family. Component of the MAJIN-TERB1-TERB2 complex, composed of MAJIN, TERB1 and TERB2. Interacts with TERF1, STAG3 and SUN1. Interacts (via Myb-like domain) with the cohesin complex; probably mediated via interaction with STAG3. Phosphorylated by CDK. Phosphorylation by CDK takes place in late prophase when the cap exchange is prominent. is important for the stabilization of telomere attachment but dispenable for the cap exchange. As to expression, expressed in testis and fetal oocytes.

The protein resides in the chromosome. It is found in the telomere. Its subcellular location is the nucleus inner membrane. Functionally, meiosis-specific telomere-associated protein involved in meiotic telomere attachment to the nucleus inner membrane, a crucial step for homologous pairing and synapsis. Component of the MAJIN-TERB1-TERB2 complex, which promotes telomere cap exchange by mediating attachment of telomeric DNA to the inner nuclear membrane and replacement of the protective cap of telomeric chromosomes: in early meiosis, the MAJIN-TERB1-TERB2 complex associates with telomeric DNA and the shelterin/telosome complex. During prophase, the complex matures and promotes release of the shelterin/telosome complex from telomeric DNA. In the MAJIN-TERB1-TERB2 complex, TERB1 probably mediates association with the shelterin/telosome complex via interaction with TERF1, promoting priming telomeric DNA attachment'. Promotes telomere association with the nuclear envelope and deposition of the SUN-KASH/LINC complex. Also recruits cohesin to telomeres to develop structural rigidity. This is Telomere repeats-binding bouquet formation protein 1 from Mus musculus (Mouse).